The following is a 287-amino-acid chain: Fructose-1,6-bisphosphatase class 1 (287 aa).

Residues Glu67, Asp86, Leu88, and Asp89 each contribute to the Mg(2+) site. Substrate-binding positions include 89–92 (DGSS), Tyr195, and Lys226. Mg(2+) is bound at residue Glu232.

It belongs to the FBPase class 1 family. As to quaternary structure, homotetramer. The cofactor is Mg(2+).

The protein localises to the cytoplasm. The catalysed reaction is beta-D-fructose 1,6-bisphosphate + H2O = beta-D-fructose 6-phosphate + phosphate. It functions in the pathway carbohydrate biosynthesis; gluconeogenesis. This Campylobacter concisus (strain 13826) protein is Fructose-1,6-bisphosphatase class 1.